The sequence spans 221 residues: ATP phosphoribosyltransferase (221 aa).

This sequence belongs to the ATP phosphoribosyltransferase family. Short subfamily. Heteromultimer composed of HisG and HisZ subunits.

Its subcellular location is the cytoplasm. It carries out the reaction 1-(5-phospho-beta-D-ribosyl)-ATP + diphosphate = 5-phospho-alpha-D-ribose 1-diphosphate + ATP. The protein operates within amino-acid biosynthesis; L-histidine biosynthesis; L-histidine from 5-phospho-alpha-D-ribose 1-diphosphate: step 1/9. Catalyzes the condensation of ATP and 5-phosphoribose 1-diphosphate to form N'-(5'-phosphoribosyl)-ATP (PR-ATP). Has a crucial role in the pathway because the rate of histidine biosynthesis seems to be controlled primarily by regulation of HisG enzymatic activity. The sequence is that of ATP phosphoribosyltransferase from Symbiobacterium thermophilum (strain DSM 24528 / JCM 14929 / IAM 14863 / T).